Here is a 202-residue protein sequence, read N- to C-terminus: Large ribosomal subunit protein uL4 (202 aa).

Positions 45–71 are disordered; sequence HAQKNRSEVSGSGKKPWRQKGTGRARV.

Belongs to the universal ribosomal protein uL4 family. In terms of assembly, part of the 50S ribosomal subunit.

Functionally, one of the primary rRNA binding proteins, this protein initially binds near the 5'-end of the 23S rRNA. It is important during the early stages of 50S assembly. It makes multiple contacts with different domains of the 23S rRNA in the assembled 50S subunit and ribosome. In terms of biological role, forms part of the polypeptide exit tunnel. This Buchnera aphidicola subsp. Baizongia pistaciae (strain Bp) protein is Large ribosomal subunit protein uL4.